Consider the following 278-residue polypeptide: Short-chain dehydrogenase/reductase eupG (278 aa).

Positions 19, 71, and 98 each coordinate NADP(+). Ser-155 acts as the Proton donor in catalysis. NADP(+) is bound by residues Tyr-188, Lys-192, and Thr-223. The Proton acceptor role is filled by Tyr-188. Residue Lys-192 is the Lowers pKa of active site Tyr of the active site.

Belongs to the short-chain dehydrogenases/reductases (SDR) family.

Its pathway is secondary metabolite biosynthesis; terpenoid biosynthesis. In terms of biological role, short-chain dehydrogenase/reductase; part of the gene cluster that mediates the biosynthesis of eupenifeldin, a bistropolone meroterpenoid that acts as an antitumor agent. The first step of eupenifeldin biosynthesis is the biosynthesis of 3-methylorcinaldehyde performed by the non-reducing polyketide synthase eupA. Oxidative dearomatization of 3-methylorcinaldehyde likely catalyzed by the FAD-dependent monooxygenase eupB is followed by oxidative ring expansion by the 2-oxoglutarate-dependent dioxygenase eupC to provide the first tropolone metabolite, tropolone stipitaldehyde. In parallel, generation of sesquiterpene alpha-humulene from farnesylpyrophosphate (FPP) is catalyzed by the terpene cyclase eupE. The cytochrome P450 monooxygenase eupD then hydroxylates humulene to humulenol. The putative Diels-Alderase eupF probably catalyzes the formation of the tropolone-humulene skeleton by linking humulenol and the polyketide moiety. The short-chain dehydrogenase/reductase eupG and the flavin-dependent monooxygenase eupH are also essential for eupenifeldin biosynthesis and are likely the additional decorating enzymes of the tropolone-humulene skeleton to produce final eupenifeldin or derivatives. This chain is Short-chain dehydrogenase/reductase eupG, found in Phoma sp.